The following is a 142-amino-acid chain: Large ribosomal subunit protein uL13 (142 aa).

This sequence belongs to the universal ribosomal protein uL13 family. In terms of assembly, part of the 50S ribosomal subunit.

Functionally, this protein is one of the early assembly proteins of the 50S ribosomal subunit, although it is not seen to bind rRNA by itself. It is important during the early stages of 50S assembly. The protein is Large ribosomal subunit protein uL13 of Pseudomonas aeruginosa (strain LESB58).